We begin with the raw amino-acid sequence, 137 residues long: Acidic phospholipase A2 PL-I (137 aa).

Positions 1–17 (AVCVSLLGASSIRPLPL) are cleaved as a signal peptide. 7 cysteine pairs are disulfide-bonded: Cys-28–Cys-89, Cys-44–Cys-136, Cys-46–Cys-62, Cys-61–Cys-117, Cys-68–Cys-110, Cys-78–Cys-103, and Cys-96–Cys-108. Tyr-45, Gly-47, and Gly-49 together coordinate Ca(2+). His-65 is a catalytic residue. Asp-66 contributes to the Ca(2+) binding site. Residue Asp-111 is part of the active site.

Requires Ca(2+) as cofactor. As to expression, expressed by the venom gland.

It localises to the secreted. It carries out the reaction a 1,2-diacyl-sn-glycero-3-phosphocholine + H2O = a 1-acyl-sn-glycero-3-phosphocholine + a fatty acid + H(+). Functionally, snake venom phospholipase A2 (PLA2) that may act in the hemostasis system of the prey. Exhibits hydrolytic activities, and prefers the anionic micelles (dPPC with deoxycholate) (793 umol/mg/min) to the zwitterionic micelles (dPPC with Triton X-100) (591 umol/mg/min). PLA2 catalyzes the calcium-dependent hydrolysis of the 2-acyl groups in 3-sn-phosphoglycerides. The polypeptide is Acidic phospholipase A2 PL-I (Walterinnesia aegyptia (Desert black snake)).